We begin with the raw amino-acid sequence, 204 residues long: Methyl-CpG-binding domain protein 3-like 2B (204 aa).

Residues 126–137 show a composition bias toward basic and acidic residues; sequence SLDRAGAERVRS. Residues 126–145 are disordered; the sequence is SLDRAGAERVRSPLEPTPGR.

It belongs to the MBD3L family.

The protein is Methyl-CpG-binding domain protein 3-like 2B of Homo sapiens (Human).